Here is a 152-residue protein sequence, read N- to C-terminus: UPF0266 membrane protein YobD (152 aa).

3 helical membrane passes run 6 to 26, 45 to 65, and 67 to 87; these read LVLILFIAALLAYALYDQFIM, VDSVIFVGLVAILIYNNVTSH, and AQMTTWLLSALALMGFYIFWI.

This sequence belongs to the UPF0266 family.

It localises to the cell inner membrane. This Salmonella choleraesuis (strain SC-B67) protein is UPF0266 membrane protein YobD.